The chain runs to 112 residues: CRISPR-associated endoribonuclease Cas2 2 (112 aa).

Asp15 serves as a coordination point for Mg(2+).

Belongs to the CRISPR-associated endoribonuclease Cas2 protein family. As to quaternary structure, homodimer, forms a heterotetramer with a Cas1 homodimer. It depends on Mg(2+) as a cofactor.

In terms of biological role, CRISPR (clustered regularly interspaced short palindromic repeat), is an adaptive immune system that provides protection against mobile genetic elements (viruses, transposable elements and conjugative plasmids). CRISPR clusters contain sequences complementary to antecedent mobile elements and target invading nucleic acids. CRISPR clusters are transcribed and processed into CRISPR RNA (crRNA). Functions as a ssRNA-specific endoribonuclease. Involved in the integration of spacer DNA into the CRISPR cassette. The sequence is that of CRISPR-associated endoribonuclease Cas2 2 from Rhodospirillum rubrum (strain ATCC 11170 / ATH 1.1.1 / DSM 467 / LMG 4362 / NCIMB 8255 / S1).